The sequence spans 441 residues: ATP-dependent protease ATPase subunit HslU (441 aa).

ATP-binding positions include Ile18, 60-65 (GVGKTE), Asp254, Glu319, and Arg391.

The protein belongs to the ClpX chaperone family. HslU subfamily. A double ring-shaped homohexamer of HslV is capped on each side by a ring-shaped HslU homohexamer. The assembly of the HslU/HslV complex is dependent on binding of ATP.

The protein localises to the cytoplasm. Its function is as follows. ATPase subunit of a proteasome-like degradation complex; this subunit has chaperone activity. The binding of ATP and its subsequent hydrolysis by HslU are essential for unfolding of protein substrates subsequently hydrolyzed by HslV. HslU recognizes the N-terminal part of its protein substrates and unfolds these before they are guided to HslV for hydrolysis. This Shewanella frigidimarina (strain NCIMB 400) protein is ATP-dependent protease ATPase subunit HslU.